A 145-amino-acid chain; its full sequence is Eukaryotic translation initiation factor 1A (145 aa).

Basic residues predominate over residues 1–15; it reads MPKNKGKGGKNRKRG. The disordered stretch occupies residues 1–25; the sequence is MPKNKGKGGKNRKRGKNEADDDKRE. Basic and acidic residues predominate over residues 16–25; the sequence is KNEADDDKRE. The S1-like domain maps to 22 to 96; the sequence is DKRELVFKED…DKADVILKLM (75 aa).

Belongs to the eIF-1A family.

Functionally, seems to be required for maximal rate of protein biosynthesis. Enhances ribosome dissociation into subunits and stabilizes the binding of the initiator Met-tRNA(I) to 40 S ribosomal subunits. This chain is Eukaryotic translation initiation factor 1A, found in Onobrychis viciifolia (Common sainfoin).